We begin with the raw amino-acid sequence, 323 residues long: tRNA uridine(34) hydroxylase (323 aa).

The Rhodanese domain maps to 127-221 (QDENTVVLDA…YGQDPEVQGD (95 aa)). The active-site Cysteine persulfide intermediate is the Cys181.

The protein belongs to the TrhO family.

The catalysed reaction is uridine(34) in tRNA + AH2 + O2 = 5-hydroxyuridine(34) in tRNA + A + H2O. In terms of biological role, catalyzes oxygen-dependent 5-hydroxyuridine (ho5U) modification at position 34 in tRNAs. The sequence is that of tRNA uridine(34) hydroxylase from Oceanobacillus iheyensis (strain DSM 14371 / CIP 107618 / JCM 11309 / KCTC 3954 / HTE831).